The chain runs to 1049 residues: ABC transporter ATM1 (1049 aa).

A mitochondrion-targeting transit peptide spans Met1–Tyr90. A run of 6 helical transmembrane segments spans residues Ile357–Leu377, Ile397–Ser419, Val481–Thr501, Tyr506–Ile526, Phe591–Thr611, and Ile619–Leu639. An ABC transmembrane type-1 domain is found at Ser360 to Leu651. The 237-residue stretch at Leu807–Ser1043 folds into the ABC transporter domain. Gly843–Ser850 lines the ATP pocket.

It belongs to the ABC transporter superfamily. ABCB family. Heavy Metal importer (TC 3.A.1.210) subfamily. Homodimer. Interacts with ISCU. Interacts with IscA2. Interacts with NBP35. Interacts with mHCF101.

Its subcellular location is the mitochondrion membrane. Its activity is regulated as follows. ATPase activity is stimulated by reduced glutathione. Functionally, transports glutathione-coordinated [4Fe-4S] iron-sulfur clusters in an ATP-dependent manner. Required for optimal parasite growth during erythrocytic stages. This Plasmodium falciparum (isolate 3D7) protein is ABC transporter ATM1.